The primary structure comprises 452 residues: Methionine aminopeptidase 2 (452 aa).

Residues 1 to 91 are disordered; it reads MTGVTGTEDT…KNKKKKKKKI (91 aa). Residues 8–38 show a composition bias toward basic and acidic residues; sequence EDTKVIESKINELNIDKSKPEKTNKVNKSDD. Residues 39–62 show a composition bias toward acidic residues; it reads VDNDDVDNDDNDDEDNDDDDDEIT. The span at 74-91 shows a compositional bias: basic residues; sequence KKKKKNKNKNKKKKKKKI. A substrate-binding site is contributed by histidine 203. Aspartate 223, aspartate 234, and histidine 305 together coordinate a divalent metal cation. Histidine 313 serves as a coordination point for substrate. A divalent metal cation-binding residues include glutamate 338 and glutamate 433.

This sequence belongs to the peptidase M24A family. Methionine aminopeptidase eukaryotic type 2 subfamily. It depends on Co(2+) as a cofactor. Zn(2+) is required as a cofactor. The cofactor is Mn(2+). Requires Fe(2+) as cofactor.

It localises to the cytoplasm. It carries out the reaction Release of N-terminal amino acids, preferentially methionine, from peptides and arylamides.. Its function is as follows. Cotranslationally removes the N-terminal methionine from nascent proteins. The N-terminal methionine is often cleaved when the second residue in the primary sequence is small and uncharged (Met-Ala-, Cys, Gly, Pro, Ser, Thr, or Val). This is Methionine aminopeptidase 2 from Candida dubliniensis (strain CD36 / ATCC MYA-646 / CBS 7987 / NCPF 3949 / NRRL Y-17841) (Yeast).